Reading from the N-terminus, the 153-residue chain is Cytochrome c-554 (153 aa).

Positions 1-20 (MRPIPALALTFSLVAMPALA) are cleaved as a signal peptide. Gln21 carries the post-translational modification Pyrrolidone carboxylic acid. Residues Met37, Cys142, Cys145, and His146 each coordinate heme c.

Post-translationally, binds 1 heme c group covalently per subunit.

The protein localises to the periplasm. Monoheme c-type cytochrome, that is particularly expressed when cells generate energy via aerobic respiration. In Cereibacter sphaeroides (strain ATCC 17023 / DSM 158 / JCM 6121 / CCUG 31486 / LMG 2827 / NBRC 12203 / NCIMB 8253 / ATH 2.4.1.) (Rhodobacter sphaeroides), this protein is Cytochrome c-554 (cycF).